We begin with the raw amino-acid sequence, 303 residues long: Putative S-adenosyl-L-methionine-dependent methyltransferase Mb1931c (303 aa).

Residues D129 and 158–159 (DL) contribute to the S-adenosyl-L-methionine site.

This sequence belongs to the UPF0677 family.

In terms of biological role, exhibits S-adenosyl-L-methionine-dependent methyltransferase activity. This is Putative S-adenosyl-L-methionine-dependent methyltransferase Mb1931c from Mycobacterium bovis (strain ATCC BAA-935 / AF2122/97).